Reading from the N-terminus, the 206-residue chain is Guanylate kinase (206 aa).

A Guanylate kinase-like domain is found at 13–193 (PLLLVVSGPS…AVSEIMSIIS (181 aa)). An ATP-binding site is contributed by 20–27 (GPSGVGKD).

This sequence belongs to the guanylate kinase family.

It is found in the cytoplasm. The enzyme catalyses GMP + ATP = GDP + ADP. Essential for recycling GMP and indirectly, cGMP. The sequence is that of Guanylate kinase from Dehalococcoides mccartyi (strain ATCC BAA-2266 / KCTC 15142 / 195) (Dehalococcoides ethenogenes (strain 195)).